The chain runs to 990 residues: Bifunctional glutamine synthetase adenylyltransferase/adenylyl-removing enzyme (990 aa).

The adenylyl removase stretch occupies residues 1–474 (MPTDNENSMT…HFNELVEESQ (474 aa)). Residues 484–990 (FIACQDAWRL…WDTLFGTCSE (507 aa)) form an adenylyl transferase region.

This sequence belongs to the GlnE family. It depends on Mg(2+) as a cofactor.

It carries out the reaction [glutamine synthetase]-O(4)-(5'-adenylyl)-L-tyrosine + phosphate = [glutamine synthetase]-L-tyrosine + ADP. It catalyses the reaction [glutamine synthetase]-L-tyrosine + ATP = [glutamine synthetase]-O(4)-(5'-adenylyl)-L-tyrosine + diphosphate. Its function is as follows. Involved in the regulation of glutamine synthetase GlnA, a key enzyme in the process to assimilate ammonia. When cellular nitrogen levels are high, the C-terminal adenylyl transferase (AT) inactivates GlnA by covalent transfer of an adenylyl group from ATP to specific tyrosine residue of GlnA, thus reducing its activity. Conversely, when nitrogen levels are low, the N-terminal adenylyl removase (AR) activates GlnA by removing the adenylyl group by phosphorolysis, increasing its activity. The regulatory region of GlnE binds the signal transduction protein PII (GlnB) which indicates the nitrogen status of the cell. The polypeptide is Bifunctional glutamine synthetase adenylyltransferase/adenylyl-removing enzyme (Alteromonas mediterranea (strain DSM 17117 / CIP 110805 / LMG 28347 / Deep ecotype)).